Consider the following 219-residue polypeptide: Mucosal pentraxin (219 aa).

The first 19 residues, 1–19, serve as a signal peptide directing secretion; it reads MEKLIVGILFLSVLSGSVA. The Pentraxin (PTX) domain occupies 24 to 219; the sequence is KGKAFIFPQE…YVVIKPKLWP (196 aa). Asn-51 is a glycosylation site (N-linked (GlcNAc...) asparagine). A disulfide bond links Cys-55 and Cys-114. Asp-77, Asn-78, Glu-155, Gln-156, Asp-157, and Gln-167 together coordinate Ca(2+).

This sequence belongs to the pentraxin family. As to quaternary structure, homopentamer. Pentraxin (or pentaxin) have a discoid arrangement of 5 non-covalently bound subunits. The cofactor is Ca(2+). As to expression, expressed in colon.

It localises to the secreted. The polypeptide is Mucosal pentraxin (Mptx1) (Mus musculus (Mouse)).